The sequence spans 284 residues: Trimeric intracellular cation channel type B-B (284 aa).

Residues 1–15 (MESLSEVSVQFSQLS) are Lumenal-facing. Residues 16–32 (MFPFFDMAHYLASVMSA) form a helical membrane-spanning segment. At 33–44 (REQAGALDIASH) the chain is on the cytoplasmic side. The helical transmembrane segment at 45-68 (SPMASWFSAMLHCFGGGILSSILL) threads the bilayer. Residues 69–79 (AEPPVGILANT) lie on the Lumenal side of the membrane. A helical membrane pass occupies residues 80–99 (TNIMLASAIWYMVYYFPYDL). Residues 100–102 (FYN) lie on the Cytoplasmic side of the membrane. The chain crosses the membrane as a helical span at residues 103-121 (CFFFLPIRLIAAGMKEVTR). The a 1,2-diacyl-sn-glycero-3-phospho-(1D-myo-inositol-4,5-bisphosphate) site is built by Lys-117 and Arg-121. The Lumenal segment spans residues 122–139 (TWKILSGITHAHSHYKDA). A helical transmembrane segment spans residues 140 to 157 (WLVMITIGWARGAGGGLI). The Cytoplasmic portion of the chain corresponds to 158 to 178 (SNFEQLVRGVWKPESNEFLKM). A helical membrane pass occupies residues 179–196 (SYPVKVTLIGAVLFTLQH). The Lumenal portion of the chain corresponds to 197-204 (GHYLPISR). The helical transmembrane segment at 205 to 225 (HNLMFIYTMFLVSIKVTMMLT) threads the bilayer. The Cytoplasmic portion of the chain corresponds to 226–284 (HSAGSPFLPLETPLHRILFGLRQNQAEVRESPSSSGAKGKPSKKTLDKDSGEQSNKKDK). Residues 250 to 284 (QAEVRESPSSSGAKGKPSKKTLDKDSGEQSNKKDK) are disordered. Over residues 269–284 (KTLDKDSGEQSNKKDK) the composition is skewed to basic and acidic residues.

It belongs to the TMEM38 family. In terms of assembly, homotrimer; conformation seems to be controled by binding to diacylglycerol (DAG).

The protein resides in the endoplasmic reticulum membrane. The enzyme catalyses K(+)(in) = K(+)(out). Channel activity is activated by increased cytosolic Ca(2+) levels and blocked by luminal high Ca(2+) levels. Intracellular monovalent cation channel required for maintenance of rapid intracellular calcium release. Acts as a potassium counter-ion channel that functions in synchronization with calcium release from intracellular stores. Activated by increased cytosolic Ca(2+) levels. The polypeptide is Trimeric intracellular cation channel type B-B (tmem38b-b) (Xenopus laevis (African clawed frog)).